The chain runs to 118 residues: Peptidyl-tRNA hydrolase (118 aa).

This sequence belongs to the PTH2 family.

It localises to the cytoplasm. The enzyme catalyses an N-acyl-L-alpha-aminoacyl-tRNA + H2O = an N-acyl-L-amino acid + a tRNA + H(+). Functionally, the natural substrate for this enzyme may be peptidyl-tRNAs which drop off the ribosome during protein synthesis. This is Peptidyl-tRNA hydrolase from Thermococcus sibiricus (strain DSM 12597 / MM 739).